The sequence spans 495 residues: Ectonucleoside triphosphate diphosphohydrolase 2 (495 aa).

Residues 1 to 4 are Cytoplasmic-facing; it reads MAGK. A helical membrane pass occupies residues 5 to 25; that stretch reads LVSLVPPLLLAAVGLAGLLLL. The Extracellular segment spans residues 26-462; the sequence is CVPTQDVREP…PGLRKGTHFS (437 aa). A glycan (N-linked (GlcNAc...) asparagine) is linked at asparagine 64. An intrachain disulfide couples cysteine 75 to cysteine 99. Asparagine 129 carries an N-linked (GlcNAc...) asparagine glycan. The Proton acceptor role is filled by glutamate 165. Residue 204 to 208 coordinates ATP; it reads GASTQ. 2 cysteine pairs are disulfide-bonded: cysteine 242-cysteine 284 and cysteine 265-cysteine 310. N-linked (GlcNAc...) asparagine glycans are attached at residues asparagine 294 and asparagine 319. 2 disulfide bridges follow: cysteine 323–cysteine 328 and cysteine 377–cysteine 399. N-linked (GlcNAc...) asparagine glycosylation is found at asparagine 378 and asparagine 443. The helical transmembrane segment at 463-483 threads the bilayer; the sequence is SWVALLLLFTVLILAALVLLL. Residues 484-495 are Cytoplasmic-facing; that stretch reads RQVRSAKSPGAL.

It belongs to the GDA1/CD39 NTPase family. Ca(2+) is required as a cofactor. Requires Mg(2+) as cofactor.

The protein resides in the cell membrane. In terms of biological role, in the nervous system, could hydrolyze ATP and other nucleotides to regulate purinergic neurotransmission. Hydrolyzes ADP only to a marginal extent. This is Ectonucleoside triphosphate diphosphohydrolase 2 (Entpd2) from Mus musculus (Mouse).